The sequence spans 297 residues: tRNA uridine(34) hydroxylase (297 aa).

The Rhodanese domain occupies R133–L228. Catalysis depends on C188, which acts as the Cysteine persulfide intermediate.

It belongs to the TrhO family.

The enzyme catalyses uridine(34) in tRNA + AH2 + O2 = 5-hydroxyuridine(34) in tRNA + A + H2O. Its function is as follows. Catalyzes oxygen-dependent 5-hydroxyuridine (ho5U) modification at position 34 in tRNAs. This Arthrobacter sp. (strain FB24) protein is tRNA uridine(34) hydroxylase.